The chain runs to 197 residues: Phospholipid hydroperoxide glutathione peroxidase (197 aa).

A Phosphoserine modification is found at Ser-40. The active site involves Sec-73. A non-standard amino acid (selenocysteine) is located at residue Sec-73.

The protein belongs to the glutathione peroxidase family. In terms of assembly, monomer. Has a tendency to form higher mass oligomers. Interacts with FUNDC1; this interaction promotes GPX4 recruitment into mitochondria through TOM/TIM complex where it is degraded by mitophagy.

Its subcellular location is the mitochondrion. The protein localises to the cytoplasm. It catalyses the reaction a hydroperoxy polyunsaturated fatty acid + 2 glutathione = a hydroxy polyunsaturated fatty acid + glutathione disulfide + H2O. The enzyme catalyses 2 glutathione + H2O2 = glutathione disulfide + 2 H2O. The catalysed reaction is tert-butyl hydroperoxide + 2 glutathione = tert-butanol + glutathione disulfide + H2O. It carries out the reaction cumene hydroperoxide + 2 glutathione = 2-phenylpropan-2-ol + glutathione disulfide + H2O. It catalyses the reaction (9S)-hydroperoxy-(10E,12Z)-octadecadienoate + 2 glutathione = (9S)-hydroxy-(10E,12Z)-octadecadienoate + glutathione disulfide + H2O. The enzyme catalyses (13S)-hydroperoxy-(9Z,11E)-octadecadienoate + 2 glutathione = (13S)-hydroxy-(9Z,11E)-octadecadienoate + glutathione disulfide + H2O. The catalysed reaction is (5S)-hydroperoxy-(6E,8Z,11Z,14Z)-eicosatetraenoate + 2 glutathione = (5S)-hydroxy-(6E,8Z,11Z,14Z)-eicosatetraenoate + glutathione disulfide + H2O. It carries out the reaction (12R)-hydroperoxy-(5Z,8Z,10E,14Z)-eicosatetraenoate + 2 glutathione = (12R)-hydroxy-(5Z,8Z,10E,14Z)-eicosatetraenoate + glutathione disulfide + H2O. It catalyses the reaction (12S)-hydroperoxy-(5Z,8Z,10E,14Z)-eicosatetraenoate + 2 glutathione = (12S)-hydroxy-(5Z,8Z,10E,14Z)-eicosatetraenoate + glutathione disulfide + H2O. The enzyme catalyses (15S)-hydroperoxy-(5Z,8Z,11Z,13E)-eicosatetraenoate + 2 glutathione = (15S)-hydroxy-(5Z,8Z,11Z,13E)-eicosatetraenoate + glutathione disulfide + H2O. The catalysed reaction is (5S)-hydroperoxy-(6E,8Z,11Z,14Z,17Z)-eicosapentaenoate + 2 glutathione = (5S)-hydroxy-(6E,8Z,11Z,14Z,17Z)-eicosapentaenoate + glutathione disulfide + H2O. It carries out the reaction (12S)-hydroperoxy-(5Z,8Z,10E,14Z,17Z)-eicosapentaenoate + 2 glutathione = (12S)-hydroxy-(5Z,8Z,10E,14Z,17Z)-eicosapentaenoate + glutathione disulfide + H2O. It catalyses the reaction (15S)-hydroperoxy-(5Z,8Z,11Z,13E,17Z)-eicosapentaenoate + 2 glutathione = (15S)-hydroxy-(5Z,8Z,11Z,13E,17Z)-eicosapentaenoate + glutathione disulfide + H2O. The enzyme catalyses (15S)-hydroperoxy-(11Z,13E)-eicosadienoate + 2 glutathione = (15S)-hydroxy-(11Z,13E)-eicosadienoate + glutathione disulfide + H2O. The catalysed reaction is (17S)-hydroperoxy-(4Z,7Z,10Z,13Z,15E,19Z)-docosahexaenoate + 2 glutathione = (17S)-hydroxy-(4Z,7Z,10Z,13Z,15E,19Z)-docosahexaenoate + glutathione disulfide + H2O. It carries out the reaction a hydroperoxy-1,2-diacyl-glycero-3-phosphocholine + 2 glutathione = a hydroxy-1,2-diacyl-glycero-3-phosphocholine + glutathione disulfide + H2O. Its function is as follows. Essential antioxidant peroxidase that directly reduces phospholipid hydroperoxide even if they are incorporated in membranes and lipoproteins. Can also reduce fatty acid hydroperoxide, cholesterol hydroperoxide and thymine hydroperoxide. Plays a key role in protecting cells from oxidative damage by preventing membrane lipid peroxidation. Required to prevent cells from ferroptosis, a non-apoptotic cell death resulting from an iron-dependent accumulation of lipid reactive oxygen species. The presence of selenocysteine (Sec) versus Cys at the active site is essential for life: it provides resistance to overoxidation and prevents cells against ferroptosis. The presence of Sec at the active site is also essential for the survival of a specific type of parvalbumin-positive interneurons, thereby preventing against fatal epileptic seizures. May be required to protect cells from the toxicity of ingested lipid hydroperoxides. Required for normal sperm development and male fertility. Essential for maturation and survival of photoreceptor cells. Plays a role in a primary T-cell response to viral and parasitic infection by protecting T-cells from ferroptosis and by supporting T-cell expansion. Plays a role of glutathione peroxidase in platelets in the arachidonic acid metabolism. Reduces hydroperoxy ester lipids formed by a 15-lipoxygenase that may play a role as down-regulator of the cellular 15-lipoxygenase pathway. Can also reduce small soluble hydroperoxides such as H2O2, cumene hydroperoxide and tert-butyl hydroperoxide. This Hylobates lar (Lar gibbon) protein is Phospholipid hydroperoxide glutathione peroxidase.